Reading from the N-terminus, the 148-residue chain is Small ribosomal subunit protein uS15 (148 aa).

The segment at 1–23 is disordered; sequence MRKSKEKGRSGSTRPPQLKKPEW.

The protein belongs to the universal ribosomal protein uS15 family. Part of the 30S ribosomal subunit.

In Thermofilum pendens (strain DSM 2475 / Hrk 5), this protein is Small ribosomal subunit protein uS15.